A 570-amino-acid polypeptide reads, in one-letter code: Probable D-xylulose kinase A (570 aa).

3 residues coordinate substrate: His-98, Asp-279, and Asn-280. ATP-binding positions include Trp-363, 470-471, and Asn-474; that span reads GG.

Belongs to the FGGY kinase family.

It localises to the cytoplasm. It catalyses the reaction D-xylulose + ATP = D-xylulose 5-phosphate + ADP + H(+). In terms of biological role, highly specific D-xylulose kinase which participates in the catabolism of xylose. Xylose is a major component of hemicelluloses such as xylan. Most fungi utilize D-xylose via three enzymatic reactions, xylose reductase (XR), xylitol dehydrogenase (XDH), and xylulokinase, to form xylulose 5-phosphate, which enters pentose phosphate pathway. The protein is Probable D-xylulose kinase A (xkiA) of Arthroderma otae (strain ATCC MYA-4605 / CBS 113480) (Microsporum canis).